The sequence spans 427 residues: Serine hydroxymethyltransferase (427 aa).

120-122 (GHI) serves as a coordination point for (6S)-5,6,7,8-tetrahydrofolate. Lys226 carries the N6-(pyridoxal phosphate)lysine modification.

This sequence belongs to the SHMT family. In terms of assembly, homodimer. Requires pyridoxal 5'-phosphate as cofactor.

It is found in the cytoplasm. Its pathway is amino-acid biosynthesis; glycine biosynthesis; glycine from L-serine: step 1/1. Catalyzes the reversible interconversion of serine and glycine with a modified folate serving as the one-carbon carrier. Also exhibits a pteridine-independent aldolase activity toward beta-hydroxyamino acids, producing glycine and aldehydes, via a retro-aldol mechanism. The protein is Serine hydroxymethyltransferase of Pyrococcus horikoshii (strain ATCC 700860 / DSM 12428 / JCM 9974 / NBRC 100139 / OT-3).